A 776-amino-acid chain; its full sequence is Glutathione biosynthesis bifunctional protein GshAB (776 aa).

Residues 1–354 (MIKLDMTILD…QLADENENNI (354 aa)) are glutamate--cysteine ligase. The ATP-grasp domain occupies 521–775 (KLVLAENNIR…IGDKILDFLF (255 aa)). 548–606 (SLFKDKQIVVKPKSTNYGWGISIFKNKFTTEDYQEALNIAFSYDSSVIIEEFIPGDEFR) lines the ATP pocket. 3 residues coordinate Mg(2+): D728, E745, and N747. The Mn(2+) site is built by D728, E745, and N747.

It in the N-terminal section; belongs to the glutamate--cysteine ligase type 1 family. Type 2 subfamily. Monomer. The cofactor is Mg(2+). Requires Mn(2+) as cofactor.

It carries out the reaction L-cysteine + L-glutamate + ATP = gamma-L-glutamyl-L-cysteine + ADP + phosphate + H(+). It catalyses the reaction gamma-L-glutamyl-L-cysteine + glycine + ATP = glutathione + ADP + phosphate + H(+). It functions in the pathway sulfur metabolism; glutathione biosynthesis; glutathione from L-cysteine and L-glutamate: step 1/2. It participates in sulfur metabolism; glutathione biosynthesis; glutathione from L-cysteine and L-glutamate: step 2/2. Synthesizes glutathione from L-glutamate and L-cysteine via gamma-L-glutamyl-L-cysteine. In Listeria welshimeri serovar 6b (strain ATCC 35897 / DSM 20650 / CCUG 15529 / CIP 8149 / NCTC 11857 / SLCC 5334 / V8), this protein is Glutathione biosynthesis bifunctional protein GshAB.